Here is a 347-residue protein sequence, read N- to C-terminus: Probable tRNA N6-adenosine threonylcarbamoyltransferase (347 aa).

Residues H109, H113, and Y130 each coordinate a divalent metal cation. Substrate-binding positions include Y130–G134, D162, G177, E181, and N277. D305 is a binding site for a divalent metal cation.

This sequence belongs to the KAE1 / TsaD family. Component of the EKC/KEOPS complex; the whole complex dimerizes. A divalent metal cation is required as a cofactor.

It is found in the cytoplasm. Its subcellular location is the nucleus. It carries out the reaction L-threonylcarbamoyladenylate + adenosine(37) in tRNA = N(6)-L-threonylcarbamoyladenosine(37) in tRNA + AMP + H(+). Its function is as follows. Component of the EKC/KEOPS complex that is required for the formation of a threonylcarbamoyl group on adenosine at position 37 (t(6)A37) in tRNAs that read codons beginning with adenine. The complex is probably involved in the transfer of the threonylcarbamoyl moiety of threonylcarbamoyl-AMP (TC-AMP) to the N6 group of A37. Likely plays a direct catalytic role in this reaction, but requires other protein(s) of the complex to fulfill this activity. The polypeptide is Probable tRNA N6-adenosine threonylcarbamoyltransferase (Drosophila melanogaster (Fruit fly)).